The sequence spans 312 residues: MRLVFAGTPETALPALHQLIDSPRHDVIAVLTRPDAASGRRGKPEPSPVARAALERGIPVLRPSRPNSAEFVAELSELAPQCCAVVAYGALLGDALLGVPPQGWVNLHFSLLPAWRGAAPVQAAIAAGDAVTGATTFQIEPSLDSGPVYGVVTETIRPTDTAGDLLGRLAVSGAELLSATLDGIAEGALTARPQPADGVTLAPKISVEQARVRWELPVPIIERRIRAVTPNPGAWTLIGDLRVKLGPVYLDAAVEPPGPLPPGAIQVDRKHVWVGTGSEPLRLGQVQPPGKKLMNAADWARGARLDPSVRAS.

Position 110-113 (110-113 (SLLP)) interacts with (6S)-5,6,7,8-tetrahydrofolate.

It belongs to the Fmt family.

It catalyses the reaction L-methionyl-tRNA(fMet) + (6R)-10-formyltetrahydrofolate = N-formyl-L-methionyl-tRNA(fMet) + (6S)-5,6,7,8-tetrahydrofolate + H(+). Functionally, attaches a formyl group to the free amino group of methionyl-tRNA(fMet). The formyl group appears to play a dual role in the initiator identity of N-formylmethionyl-tRNA by promoting its recognition by IF2 and preventing the misappropriation of this tRNA by the elongation apparatus. This chain is Methionyl-tRNA formyltransferase, found in Mycobacterium ulcerans (strain Agy99).